An 858-amino-acid polypeptide reads, in one-letter code: Rho GTPase-activating protein 17 (858 aa).

In terms of domain architecture, BAR spans 14-246 (QTVGRAEKTE…MRAHQDKWAE (233 aa)). One can recognise a Rho-GAP domain in the interval 252–442 (TPLEEHLKRS…PIIQHADWFF (191 aa)). The segment covering 459-475 (TPNSNHSSHTGNDSDSG) has biased composition (polar residues). Residues 459–482 (TPNSNHSSHTGNDSDSGTLERKRP) are disordered. At serine 484 the chain carries Phosphoserine. The disordered stretch occupies residues 516–823 (RKHISPAFQP…VTDTNSRVSE (308 aa)). A compositionally biased stretch (polar residues) spans 543–552 (PSQSSRADSN). A compositionally biased stretch (low complexity) spans 553 to 563 (SVGGPVPSSSG). Phosphoserine is present on serine 575. Residues 592–617 (RNSNQITTVPNQAQTGGNSHQLSVGT) show a composition bias toward polar residues. Residues 637–650 (APAPPKPGNPPPGH) are compositionally biased toward pro residues. Residues 653-702 (GQSSPGTGTSPKPSTRSPSPPQQQQQQQQQQQQQQQQQQQQQQQQQQQQQ) are compositionally biased toward low complexity. Phosphoserine is present on residues serine 710 and serine 712. Composition is skewed to pro residues over residues 716-729 (IQAP…PPTQ) and 738-756 (EPGP…PPPA). 3 positions are modified to phosphothreonine: threonine 742, threonine 746, and threonine 748. The SH3-binding signature appears at 742–755 (TPPQTPTPPSTPPP). At serine 751 the chain carries Phosphoserine. The residue at position 752 (threonine 752) is a Phosphothreonine. Residues 757–769 (KQNSSQSETTQLH) are compositionally biased toward polar residues. The span at 784–794 (RPSVPPPPNPP) shows a compositional bias: pro residues. The span at 806 to 823 (SVPTASRIVTDTNSRVSE) shows a compositional bias: polar residues.

Component of a complex whose core is composed of ARHGAP17, AMOT, PALS1, PATJ and PARD3/PAR3. Interacts with NHERF1, FNBP1, TRIP10, CAPZA (CAPZA1, CAPZA2 or CAPZA3), CAPZB, CD2AP and SH3KBP1/CIN85. Highly expressed in brain; neuron-specific (at protein level). Isoform 2, isoform 3 and isoform 4 are predominantly expressed in neuronal tissues and correlate well with the differentiation of neurons, while isoform 1 is strongly expressed in embryonic brain.

It is found in the membrane. The protein resides in the cytoplasm. The protein localises to the cell junction. Its subcellular location is the tight junction. In terms of biological role, rho GTPase-activating protein involved in the maintenance of tight junction by regulating the activity of CDC42, thereby playing a central role in apical polarity of epithelial cells. Specifically acts as a GTPase activator for the CDC42 GTPase by converting it to an inactive GDP-bound state. The complex formed with AMOT acts by regulating the uptake of polarity proteins at tight junctions, possibly by deciding whether tight junction transmembrane proteins are recycled back to the plasma membrane or sent elsewhere. Participates in the Ca(2+)-dependent regulation of exocytosis, possibly by catalyzing GTPase activity of Rho family proteins and by inducing the reorganization of the cortical actin filaments. Acts as a GTPase activator in vitro for RAC1. The polypeptide is Rho GTPase-activating protein 17 (Arhgap17) (Rattus norvegicus (Rat)).